The following is a 255-amino-acid chain: Thiazole synthase (255 aa).

The Schiff-base intermediate with DXP role is filled by lysine 96. 1-deoxy-D-xylulose 5-phosphate contacts are provided by residues glycine 157, 183–184, and 205–206; these read AG and NT.

It belongs to the ThiG family. In terms of assembly, homotetramer. Forms heterodimers with either ThiH or ThiS.

Its subcellular location is the cytoplasm. It catalyses the reaction [ThiS sulfur-carrier protein]-C-terminal-Gly-aminoethanethioate + 2-iminoacetate + 1-deoxy-D-xylulose 5-phosphate = [ThiS sulfur-carrier protein]-C-terminal Gly-Gly + 2-[(2R,5Z)-2-carboxy-4-methylthiazol-5(2H)-ylidene]ethyl phosphate + 2 H2O + H(+). It participates in cofactor biosynthesis; thiamine diphosphate biosynthesis. Functionally, catalyzes the rearrangement of 1-deoxy-D-xylulose 5-phosphate (DXP) to produce the thiazole phosphate moiety of thiamine. Sulfur is provided by the thiocarboxylate moiety of the carrier protein ThiS. In vitro, sulfur can be provided by H(2)S. In Staphylococcus haemolyticus (strain JCSC1435), this protein is Thiazole synthase.